A 418-amino-acid chain; its full sequence is Failed axon connections (418 aa).

Disordered stretches follow at residues 1–95 and 361–418; these read MASE…QKFN and AHIP…EETK. 2 stretches are compositionally biased toward low complexity: residues 9-19 and 28-45; these read PAEETPAVAAA and SAAP…APAV. Composition is skewed to basic and acidic residues over residues 46–77 and 364–418; these read EKAE…KDEA and PKPE…EETK.

The protein belongs to the FAX family.

Together with Abl, involved in embryonic axonal development. This Drosophila melanogaster (Fruit fly) protein is Failed axon connections (fax).